Consider the following 170-residue polypeptide: Ribosome maturation factor RimP (170 aa).

This sequence belongs to the RimP family.

It localises to the cytoplasm. Required for maturation of 30S ribosomal subunits. The sequence is that of Ribosome maturation factor RimP from Acidothermus cellulolyticus (strain ATCC 43068 / DSM 8971 / 11B).